The following is a 216-amino-acid chain: Small ribosomal subunit protein uS3c (216 aa).

The region spanning 43–115 (FENDWGTLYN…QTRIKVIQVN (73 aa)) is the KH type-2 domain.

Belongs to the universal ribosomal protein uS3 family. In terms of assembly, part of the 30S ribosomal subunit.

It localises to the plastid. It is found in the chloroplast. The polypeptide is Small ribosomal subunit protein uS3c (rps3) (Emiliania huxleyi (Coccolithophore)).